Consider the following 58-residue polypeptide: Photosystem II reaction center protein K (58 aa).

The propeptide occupies 1–21 (MLNMISTFFDSSSNFSEAFLA). A helical membrane pass occupies residues 29–49 (IFDPIVDVMPIIPVFFLLLAF).

This sequence belongs to the PsbK family. In terms of assembly, PSII is composed of 1 copy each of membrane proteins PsbA, PsbB, PsbC, PsbD, PsbE, PsbF, PsbH, PsbI, PsbJ, PsbK, PsbL, PsbM, PsbT, PsbX, PsbY, PsbZ, Psb30/Ycf12, at least 3 peripheral proteins of the oxygen-evolving complex and a large number of cofactors. It forms dimeric complexes.

The protein resides in the plastid. It localises to the chloroplast thylakoid membrane. One of the components of the core complex of photosystem II (PSII). PSII is a light-driven water:plastoquinone oxidoreductase that uses light energy to abstract electrons from H(2)O, generating O(2) and a proton gradient subsequently used for ATP formation. It consists of a core antenna complex that captures photons, and an electron transfer chain that converts photonic excitation into a charge separation. This chain is Photosystem II reaction center protein K, found in Chaetosphaeridium globosum (Charophycean green alga).